The chain runs to 328 residues: Flap endonuclease 1 (328 aa).

Residues 1–98 (MGVKFKDITN…ETQEERINIK (98 aa)) are N-domain. Residues Asp27, Asp80, Glu152, Glu154, Asp173, Asp175, and Asp227 each coordinate Mg(2+). An I-domain region spans residues 116-248 (AARKYAARTT…KGIKLIHKYG (133 aa)). Residues 320-328 (AQSSLEDWF) form an interaction with PCNA region.

It belongs to the XPG/RAD2 endonuclease family. FEN1 subfamily. As to quaternary structure, interacts with PCNA. PCNA stimulates the nuclease activity without altering cleavage specificity. The cofactor is Mg(2+).

Its function is as follows. Structure-specific nuclease with 5'-flap endonuclease and 5'-3' exonuclease activities involved in DNA replication and repair. During DNA replication, cleaves the 5'-overhanging flap structure that is generated by displacement synthesis when DNA polymerase encounters the 5'-end of a downstream Okazaki fragment. Binds the unpaired 3'-DNA end and kinks the DNA to facilitate 5' cleavage specificity. Cleaves one nucleotide into the double-stranded DNA from the junction in flap DNA, leaving a nick for ligation. Also involved in the base excision repair (BER) pathway. Acts as a genome stabilization factor that prevents flaps from equilibrating into structures that lead to duplications and deletions. Also possesses 5'-3' exonuclease activity on nicked or gapped double-stranded DNA. This is Flap endonuclease 1 from Methanosphaera stadtmanae (strain ATCC 43021 / DSM 3091 / JCM 11832 / MCB-3).